A 317-amino-acid chain; its full sequence is Urease accessory protein 6 (317 aa).

Belongs to the UreF family. URE4, URE6 and URE7 may form a complex that acts as a GTP-hydrolysis-dependent molecular chaperone, activating the urease apoprotein URE1.

Functionally, urease accessory protein required for the maturation and activation of urease via the functional incorporation of the urease nickel metallocenter. Plays a role in host brain invasion. This chain is Urease accessory protein 6, found in Cryptococcus neoformans var. grubii serotype A (strain H99 / ATCC 208821 / CBS 10515 / FGSC 9487) (Filobasidiella neoformans var. grubii).